Here is a 615-residue protein sequence, read N- to C-terminus: Protein PSK SIMULATOR 2 (615 aa).

Residue Gly2 is the site of N-myristoyl glycine attachment. Residues 16–27 (KKLRSNDDDKSR) are compositionally biased toward basic and acidic residues. Disordered stretches follow at residues 16–59 (KKLR…KSSK) and 506–529 (AHGV…SNTQ). Over residues 42–52 (SDSYYSDNYGG) the composition is skewed to low complexity. Positions 512–529 (QETNHVSPPNNRTISNTQ) are enriched in polar residues.

The protein resides in the nucleus. In terms of biological role, promotes seedling growth probably via the regulation of phytosulfokine (PSK) signaling; PSK are peptide phytohormones acting as growth factors. Involved in PSK-induced root growth. Together with PSI1 and PSI3, required during vegetative growth and reproduction. This chain is Protein PSK SIMULATOR 2, found in Arabidopsis thaliana (Mouse-ear cress).